The following is a 339-amino-acid chain: Geranylgeranyl pyrophosphate synthase AN1592 (339 aa).

Residues lysine 41, arginine 44, and histidine 73 each contribute to the isopentenyl diphosphate site. Residues aspartate 80 and aspartate 84 each coordinate Mg(2+). Arginine 89 contributes to the dimethylallyl diphosphate binding site. Isopentenyl diphosphate is bound at residue arginine 90. Residues lysine 192, threonine 193, and glutamine 228 each coordinate dimethylallyl diphosphate. Residue aspartate 231 coordinates Mg(2+). Residues asparagine 235, lysine 245, and lysine 255 each coordinate dimethylallyl diphosphate.

This sequence belongs to the FPP/GGPP synthase family. Mg(2+) is required as a cofactor.

The catalysed reaction is isopentenyl diphosphate + dimethylallyl diphosphate = (2E)-geranyl diphosphate + diphosphate. It carries out the reaction isopentenyl diphosphate + (2E)-geranyl diphosphate = (2E,6E)-farnesyl diphosphate + diphosphate. It catalyses the reaction isopentenyl diphosphate + (2E,6E)-farnesyl diphosphate = (2E,6E,10E)-geranylgeranyl diphosphate + diphosphate. The protein operates within secondary metabolite biosynthesis. In terms of biological role, geranylgeranyl pyrophosphate synthase; part of the gene cluster that mediates the biosynthesis of erinacines, cyathane-xylosides that show unique biological activities, including leishmanicidal activity, stimulating activity for nerve growth-factor synthesis, and agonistic activity toward the kappa opioid receptor. The geranylgeranyl diphosphate (GGPP) synthase eriE catalyzes the first step in erinacines biosynthesis via conversion of farnesyl pyrophosphate and isopentyl pyrophosphate into geranylgeranyl pyrophosphate (GGPP). GGPP is then substrate of the diterpene cyclase eriG for the production of cyatha-3,12-diene. The cytochrome P450 monooxygenase eriI then hydroxylates cyatha-3,12-diene at C-14 of the seven-membered ring to produce erinacol, which is further hydroxylated at C-15 by the cytochrome P450 monooxygenase eriC to yield cyathadiol. The cytochrome P450 monooxygenase eriA then catalyzes C-11 hydroxylation in the presence of the short chain dehydrogenase/reductase (SDR) eriH, which leads to the production of cyathatriol. The acetyltransferase eriL converts cyathatriol into 11-O-acetyl-cyathatriol. The SDR eriH catalyzes further oxidation of 11-O-acetyl-cyathatriol into 1-O-acetylcyathin A3. Finally, the glycosyl transferase eriJ tranfers xylose from UDP-xylose onto C-14 of 11-O-acetyl-cyathatriol to form eracine Q. EriJ is also able to convert 11-O-acetyl-cyathatriol to eracine Q2 by using UDP-D-glucose as cosubstrate, but at a lower rate. In the absence of eriL and eriJ, the SDR eriH is able to convert cyathatriol to cyathin A3; this is likely a switching mechanism in the biosynthesis of cyathins (C-14 ketogroup)and erinacines (C-14 glycosylated group). The roles of the SDR eriB, the polyprenyl transferase eriF and the dehydrogenase eriK have still to be identified. The sequence is that of Geranylgeranyl pyrophosphate synthase AN1592 from Hericium erinaceus (Lion's mane mushroom).